The chain runs to 131 residues: Auxin-responsive protein SAUR77 (131 aa).

The protein belongs to the ARG7 family.

May be involved in the regulation of ethylene receptor signaling. Promotes cell expansion and plant growth. This is Auxin-responsive protein SAUR77 from Arabidopsis thaliana (Mouse-ear cress).